We begin with the raw amino-acid sequence, 41 residues long: Photosystem I reaction center subunit IX (41 aa).

Residues 7–27 (YLSTAPVLATLWFGLLAGILI) traverse the membrane as a helical segment.

The protein belongs to the PsaJ family.

It localises to the plastid. Its subcellular location is the chloroplast thylakoid membrane. Functionally, may help in the organization of the PsaE and PsaF subunits. The polypeptide is Photosystem I reaction center subunit IX (Chara vulgaris (Common stonewort)).